A 160-amino-acid chain; its full sequence is Phosphopantetheine adenylyltransferase (160 aa).

This sequence belongs to the eukaryotic CoaD family.

It localises to the cytoplasm. It carries out the reaction (R)-4'-phosphopantetheine + ATP + H(+) = 3'-dephospho-CoA + diphosphate. The protein operates within cofactor biosynthesis; coenzyme A biosynthesis. Functionally, reversibly transfers an adenylyl group from ATP to 4'-phosphopantetheine, yielding dephospho-CoA (dPCoA) and pyrophosphate. The polypeptide is Phosphopantetheine adenylyltransferase (Pyrococcus furiosus (strain ATCC 43587 / DSM 3638 / JCM 8422 / Vc1)).